Reading from the N-terminus, the 849-residue chain is Serine/threonine-protein phosphatase 4 regulatory subunit 3B (849 aa).

Residues 1–100 (MSDTRRRVKV…DEIWEKICQV (100 aa)) form the WH1 domain. Ser117 and Ser695 each carry phosphoserine. Residues 714–724 (EMWFNEDEEEE) show a composition bias toward acidic residues. Residues 714-849 (EMWFNEDEEE…SPRKRPRLGS (136 aa)) form a disordered region. Residues 733-764 (EKPKPEDDFPDNYEKFMETKKAKESEDKENLP) show a composition bias toward basic and acidic residues. Residues 776-818 (FSHSASAANGTNSKSVVAQIPPATSNGSSSKTTNLPTSVTATK) show a composition bias toward polar residues. Acidic residues predominate over residues 827-838 (YPDDEEEDEEEE). A Phosphoserine modification is found at Ser840.

Belongs to the SMEK family. Serine/threonine-protein phosphatase 4 (PP4) occurs in different assemblies of the catalytic and one or more regulatory subunits. Component of the PP4 complex PPP4C-PPP4R2-PPP4R3B. Moderately expressed in tissues and specific brain regions examined.

Its subcellular location is the cytoplasm. The protein resides in the cytoskeleton. It is found in the microtubule organizing center. It localises to the centrosome. The protein localises to the nucleus. Functionally, regulatory subunit of serine/threonine-protein phosphatase 4 (PP4). May regulate the activity of PPP4C at centrosomal microtubule organizing centers. The sequence is that of Serine/threonine-protein phosphatase 4 regulatory subunit 3B from Homo sapiens (Human).